The sequence spans 320 residues: Cytochrome f (320 aa).

The N-terminal stretch at 1 to 35 (MQTINTFSWIKEQITRSISISLILYIITRSSIANA) is a signal peptide. Positions 36, 56, 59, and 60 each coordinate heme. A helical transmembrane segment spans residues 286–305 (IQGLLFFFASVILAQIFLVL).

It belongs to the cytochrome f family. The 4 large subunits of the cytochrome b6-f complex are cytochrome b6, subunit IV (17 kDa polypeptide, petD), cytochrome f and the Rieske protein, while the 4 small subunits are PetG, PetL, PetM and PetN. The complex functions as a dimer. The cofactor is heme.

The protein resides in the plastid. The protein localises to the chloroplast thylakoid membrane. Functionally, component of the cytochrome b6-f complex, which mediates electron transfer between photosystem II (PSII) and photosystem I (PSI), cyclic electron flow around PSI, and state transitions. In Spinacia oleracea (Spinach), this protein is Cytochrome f (petA).